Reading from the N-terminus, the 300-residue chain is tRNA dimethylallyltransferase (300 aa).

ATP is bound at residue 9–16 (GPTASGKS). A substrate-binding site is contributed by 11-16 (TASGKS). Positions 34–37 (DSKQ) are interaction with substrate tRNA.

The protein belongs to the IPP transferase family. Monomer. The cofactor is Mg(2+).

It carries out the reaction adenosine(37) in tRNA + dimethylallyl diphosphate = N(6)-dimethylallyladenosine(37) in tRNA + diphosphate. Catalyzes the transfer of a dimethylallyl group onto the adenine at position 37 in tRNAs that read codons beginning with uridine, leading to the formation of N6-(dimethylallyl)adenosine (i(6)A). The chain is tRNA dimethylallyltransferase from Ehrlichia canis (strain Jake).